Reading from the N-terminus, the 248-residue chain is MSFVVIIPARFSSTRLLGKPLVDINGKPMIVHVLERARESGAERIIVATDHEDVARAVEAAGGEVCMTRADHQSGTERLAEVVEKCGFSDDTVIVNVQGDEPMIPAVIIRQVAENLAQRQVGMATLAVPIHSAEEAFNPNAVKVVLDAEGYALYFSRATIPWDRDRFAKSLETVGDACLRHLGIYGYRAGFIRRYVSWQPSPLEHIEMLEQLRVLWYGEKIHVAVAKAVPGTGVDTADDLERVRAEMR.

The protein belongs to the KdsB family.

The protein resides in the cytoplasm. The enzyme catalyses 3-deoxy-alpha-D-manno-oct-2-ulosonate + CTP = CMP-3-deoxy-beta-D-manno-octulosonate + diphosphate. Its pathway is nucleotide-sugar biosynthesis; CMP-3-deoxy-D-manno-octulosonate biosynthesis; CMP-3-deoxy-D-manno-octulosonate from 3-deoxy-D-manno-octulosonate and CTP: step 1/1. The protein operates within bacterial outer membrane biogenesis; lipopolysaccharide biosynthesis. In terms of biological role, activates KDO (a required 8-carbon sugar) for incorporation into bacterial lipopolysaccharide in Gram-negative bacteria. The chain is 3-deoxy-manno-octulosonate cytidylyltransferase from Salmonella paratyphi A (strain ATCC 9150 / SARB42).